Here is a 192-residue protein sequence, read N- to C-terminus: A-type ATP synthase subunit E (192 aa).

It belongs to the V-ATPase E subunit family. In terms of assembly, has multiple subunits with at least A(3), B(3), C, D, E, F, H, I and proteolipid K(x).

The protein localises to the cell membrane. Its function is as follows. Component of the A-type ATP synthase that produces ATP from ADP in the presence of a proton gradient across the membrane. The chain is A-type ATP synthase subunit E from Metallosphaera sedula (strain ATCC 51363 / DSM 5348 / JCM 9185 / NBRC 15509 / TH2).